Consider the following 63-residue polypeptide: Large ribosomal subunit protein bL33m (63 aa).

The protein belongs to the bacterial ribosomal protein bL33 family.

The protein localises to the mitochondrion. This is Large ribosomal subunit protein bL33m (mrpl33) from Dictyostelium discoideum (Social amoeba).